The following is a 79-amino-acid chain: Large ribosomal subunit protein bL31c (79 aa).

The protein belongs to the bacterial ribosomal protein bL31 family. Type A subfamily. Part of the 50S ribosomal subunit.

It is found in the plastid. The protein resides in the chloroplast. Functionally, binds the 23S rRNA. The sequence is that of Large ribosomal subunit protein bL31c from Gracilaria tenuistipitata var. liui (Red alga).